The sequence spans 349 residues: MGQQHGTRNGLTHRELPRGVGLLLAMALMNVALYLCLDQLFISPGRSTADSRRCPPGYFRMGRMRNCSRWLSCEELRTEVRQLKRVGEGAVKRVFLSEWKEHKVALSRLTRLEMKEDFLHGLQMLKSLQSEHVVTLVGYCEEDGTILTEYHPLGSLSNLEETLNLSKYQDVNTWQHRLQLAMEYVSIINYLHHSPLGTRVMCDSNDLPKTLSQYLLTSNFSIVANDLDALPLVDHDSGVLIKCGHRELHGDFVAPEQLWPYGEDTPFQDDLMPSYNEKVDIWKIPDVSSFLLGHVEGSDMVRFHLFDIHKACKSQIPAERPTAQNVLDAYQRVFHSLRDTVMSQTKEML.

Over 1–19 the chain is Cytoplasmic; sequence MGQQHGTRNGLTHRELPRG. Residues 20–42 form a helical; Signal-anchor for type II membrane protein membrane-spanning segment; it reads VGLLLAMALMNVALYLCLDQLFI. The Lumenal portion of the chain corresponds to 43–349; that stretch reads SPGRSTADSR…TVMSQTKEML (307 aa). N-linked (GlcNAc...) asparagine glycans are attached at residues N66, N164, and N219. The Protein kinase domain maps to 80–349; it reads VRQLKRVGEG…TVMSQTKEML (270 aa).

Belongs to the protein kinase superfamily. Ser/Thr protein kinase family. STKL subfamily.

It localises to the endoplasmic reticulum membrane. The enzyme catalyses 3-O-[beta-D-GalNAc-(1-&gt;3)-beta-D-GlcNAc-(1-&gt;4)-alpha-D-Man]-L-Thr-[protein] + ATP = 3-O-[beta-D-GalNAc-(1-&gt;3)-beta-D-GlcNAc-(1-&gt;4)-(O-6-P-alpha-D-Man)]-Thr-[protein] + ADP + H(+). Protein O-mannose kinase that specifically mediates phosphorylation at the 6-position of an O-mannose of the trisaccharide (N-acetylgalactosamine (GalNAc)-beta-1,3-N-acetylglucosamine (GlcNAc)-beta-1,4-mannose) to generate phosphorylated O-mannosyl trisaccharide (N-acetylgalactosamine-beta-1,3-N-acetylglucosamine-beta-1,4-(phosphate-6-)mannose). Phosphorylated O-mannosyl trisaccharide is a carbohydrate structure present in alpha-dystroglycan (DAG1), which is required for binding laminin G-like domain-containing extracellular proteins with high affinity. Only shows kinase activity when the GalNAc-beta-3-GlcNAc-beta-terminus is linked to the 4-position of O-mannose, suggesting that this disaccharide serves as the substrate recognition motif. This Mus musculus (Mouse) protein is Protein O-mannose kinase (Pomk).